The sequence spans 131 residues: Histone H2B.2 (131 aa).

Basic and acidic residues predominate over residues 1–19 (MSSAAEKKPASKAPAEKKP). Positions 1–37 (MSSAAEKKPASKAPAEKKPAAKKTSTSVDGKKRSKVR) are disordered. An N6-acetyllysine; alternate mark is found at Lys-7 and Lys-8. Residues Lys-7 and Lys-8 each participate in a glycyl lysine isopeptide (Lys-Gly) (interchain with G-Cter in SUMO); alternate cross-link. A Phosphoserine modification is found at Ser-11. At Lys-12 the chain carries N6-acetyllysine. N6-acetyllysine; alternate occurs at positions 17, 18, 22, and 23. Residues Lys-17 and Lys-18 each participate in a glycyl lysine isopeptide (Lys-Gly) (interchain with G-Cter in SUMO); alternate cross-link. The residue at position 22 (Lys-22) is an N6-butyryllysine; alternate. Lys-23 is subject to N6-methyllysine; alternate. Residue Lys-35 is modified to N6-succinyllysine. Lys-38 is modified (N6,N6-dimethyllysine). Lys-47 is subject to N6-succinyllysine. Residue Lys-124 forms a Glycyl lysine isopeptide (Lys-Gly) (interchain with G-Cter in ubiquitin) linkage.

Belongs to the histone H2B family. The nucleosome is a histone octamer containing two molecules each of H2A, H2B, H3 and H4 assembled in one H3-H4 heterotetramer and two H2A-H2B heterodimers. The octamer wraps approximately 147 bp of DNA. Interacts with NAP1. In terms of processing, monoubiquitinated by the RAD6/UBC2-BRE1 complex to form H2BK123ub1. H2BK123ub1 gives a specific tag for epigenetic transcriptional activation and is also prerequisite for H3K4me and H3K79me formation. H2BK123ub1 also modulates the formation of double-strand breaks during meiosis and is a prerequisite for DNA-damage checkpoint activation. Deubiquitination is performed by UBP8 in presence of SGF11. Post-translationally, phosphorylated by STE20 to form H2BS10ph during progression through meiotic prophase. May be correlated with chromosome condensation. H2BS10ph is also formed after H(2)O(2) treatment, and is a step leading to apoptosis. Acetylated by GCN5, a component of the SAGA complex, to form H2BK11ac and H2BK16ac. H2BK16ac can also be formed by ESA1, a component of the NuA4 histone acetyltransferase (HAT) complex. Acetylation of N-terminal lysines and particularly formation of H2BK11acK16ac has a positive effect on transcription. In terms of processing, sumoylation to form H2BK6su or H2BK7su, and probably also H2BK16su or H2BK17su, occurs preferentially near the telomeres and represses gene transcription.

The protein localises to the nucleus. It is found in the chromosome. Functionally, core component of nucleosome. Nucleosomes wrap and compact DNA into chromatin, limiting DNA accessibility to the cellular machineries which require DNA as a template. Histones thereby play a central role in transcription regulation, DNA repair, DNA replication and chromosomal stability. DNA accessibility is regulated via a complex set of post-translational modifications of histones, also called histone code, and nucleosome remodeling. The chain is Histone H2B.2 (HTB2) from Saccharomyces cerevisiae (strain ATCC 204508 / S288c) (Baker's yeast).